Reading from the N-terminus, the 97-residue chain is Co-chaperonin GroES (97 aa).

Belongs to the GroES chaperonin family. In terms of assembly, heptamer of 7 subunits arranged in a ring. Interacts with the chaperonin GroEL.

The protein localises to the cytoplasm. Together with the chaperonin GroEL, plays an essential role in assisting protein folding. The GroEL-GroES system forms a nano-cage that allows encapsulation of the non-native substrate proteins and provides a physical environment optimized to promote and accelerate protein folding. GroES binds to the apical surface of the GroEL ring, thereby capping the opening of the GroEL channel. The polypeptide is Co-chaperonin GroES (Aeromonas salmonicida).